We begin with the raw amino-acid sequence, 481 residues long: Eukaryotic translation initiation factor 3 subunit L (481 aa).

Residues 1–22 (MSVDARTAYPGSRPPANMQDES) form a disordered region. The region spanning 262 to 457 (DAIRTFSHIL…DLDYAIEGNL (196 aa)) is the PCI domain.

It belongs to the eIF-3 subunit L family. Component of the eukaryotic translation initiation factor 3 (eIF-3) complex.

It is found in the cytoplasm. Functionally, component of the eukaryotic translation initiation factor 3 (eIF-3) complex, which is involved in protein synthesis of a specialized repertoire of mRNAs and, together with other initiation factors, stimulates binding of mRNA and methionyl-tRNAi to the 40S ribosome. The eIF-3 complex specifically targets and initiates translation of a subset of mRNAs involved in cell proliferation. The chain is Eukaryotic translation initiation factor 3 subunit L from Coccidioides immitis (strain RS) (Valley fever fungus).